The primary structure comprises 409 residues: Spermatogenesis-associated protein 2-like protein (409 aa).

3 disordered regions span residues 233–257 (EDEG…TSEL), 270–299 (LWGA…PQPE), and 313–337 (RPGD…IPEP).

Belongs to the SPATA2 family.

This chain is Spermatogenesis-associated protein 2-like protein (SPATA2L), found in Bos taurus (Bovine).